The following is a 230-amino-acid chain: Broad specificity amino-acid racemase YgeA (230 aa).

Residues methionine 10, glutamine 52, and 83-85 (TNT) each bind substrate. The active-site Proton donor is threonine 83. The Proton acceptor role is filled by cysteine 197. Residue 198 to 199 (TE) coordinates substrate.

It belongs to the aspartate/glutamate racemases family.

It carries out the reaction an L-alpha-amino acid = a D-alpha-amino acid. The catalysed reaction is L-homoserine = D-homoserine. Its function is as follows. Amino-acid racemase able to utilize a broad range of substrates. Highest activity is observed with L-homoserine and D-homoserine. Has tenfold lower activity against L-methionine, L-leucine, L-valine and L-histidine. Has low activity with L-norvaline, L-asparagine, D-methionine, L-aminobutyric acid, L-isoleucine, L-serine, L-norleucine, L-alanine, L-glutamine, LL-diaminopimelic acid and L-phenylalanine. Has no activity against ten L-amino acids (Thr, Glu, Asp, Arg, Lys, Tyr, Trp, Orn, Cit and Aad). D-amino acids might be used as components of peptidoglycan and/or be involved in peptidoglycan metabolism and remodeling. The protein is Broad specificity amino-acid racemase YgeA (ygeA) of Escherichia coli (strain K12).